We begin with the raw amino-acid sequence, 330 residues long: Phosphate acyltransferase (330 aa).

The protein belongs to the PlsX family. In terms of assembly, homodimer. Probably interacts with PlsY.

The protein resides in the cytoplasm. It carries out the reaction a fatty acyl-[ACP] + phosphate = an acyl phosphate + holo-[ACP]. Its pathway is lipid metabolism; phospholipid metabolism. In terms of biological role, catalyzes the reversible formation of acyl-phosphate (acyl-PO(4)) from acyl-[acyl-carrier-protein] (acyl-ACP). This enzyme utilizes acyl-ACP as fatty acyl donor, but not acyl-CoA. The polypeptide is Phosphate acyltransferase (Bacillus cereus (strain B4264)).